Here is a 95-residue protein sequence, read N- to C-terminus: Putative ESAT-6-like protein X (95 aa).

A disordered region spans residues 72–95 (HGQKVQRASSSMADTDRSVSSAWS).

This sequence belongs to the WXG100 family.

This chain is Putative ESAT-6-like protein X, found in Mycobacterium leprae (strain TN).